The primary structure comprises 390 residues: GTPase Obg (390 aa).

An Obg domain is found at 1–159 (MKFIDESLIR…RDLLLELMLL (159 aa)). The OBG-type G domain occupies 160–333 (ADVGMLGLPN…LCRDIMDFII (174 aa)). Residues 166–173 (GLPNAGKS), 191–195 (FTTLV), 213–216 (DIPG), 283–286 (NKID), and 314–316 (SAA) each bind GTP. Residues S173 and T193 each contribute to the Mg(2+) site.

Belongs to the TRAFAC class OBG-HflX-like GTPase superfamily. OBG GTPase family. As to quaternary structure, monomer. Mg(2+) is required as a cofactor.

Its subcellular location is the cytoplasm. Its function is as follows. An essential GTPase which binds GTP, GDP and possibly (p)ppGpp with moderate affinity, with high nucleotide exchange rates and a fairly low GTP hydrolysis rate. Plays a role in control of the cell cycle, stress response, ribosome biogenesis and in those bacteria that undergo differentiation, in morphogenesis control. This is GTPase Obg from Haemophilus influenzae (strain 86-028NP).